A 24-amino-acid polypeptide reads, in one-letter code: Myotoxin TmC4-47.2 (24 aa).

A disordered region spans residues 1-24 (KASSSAPKGWTHHGSRFTFHRGSM). Positions 10-24 (WTHHGSRFTFHRGSM) are enriched in basic residues. Residues 13 to 24 (HGSRFTFHRGSM) enclose the C-type lectin domain.

Expressed by the venom gland.

Its subcellular location is the secreted. Able to depolarize frog skeletal muscle fibers, but has no effects on squid giant axons. Tetrodotoxin is able to partially antagonize the depolarization. Induces myonecrosis. This is Myotoxin TmC4-47.2 from Thalassophryne maculosa (Cano toadfish).